The primary structure comprises 290 residues: Ribosomal RNA small subunit methyltransferase A (290 aa).

Asparagine 27, leucine 29, glycine 54, glutamate 75, aspartate 100, and asparagine 125 together coordinate S-adenosyl-L-methionine.

This sequence belongs to the class I-like SAM-binding methyltransferase superfamily. rRNA adenine N(6)-methyltransferase family. RsmA subfamily.

It localises to the cytoplasm. It catalyses the reaction adenosine(1518)/adenosine(1519) in 16S rRNA + 4 S-adenosyl-L-methionine = N(6)-dimethyladenosine(1518)/N(6)-dimethyladenosine(1519) in 16S rRNA + 4 S-adenosyl-L-homocysteine + 4 H(+). Functionally, specifically dimethylates two adjacent adenosines (A1518 and A1519) in the loop of a conserved hairpin near the 3'-end of 16S rRNA in the 30S particle. May play a critical role in biogenesis of 30S subunits. The chain is Ribosomal RNA small subunit methyltransferase A from Streptococcus pyogenes serotype M3 (strain ATCC BAA-595 / MGAS315).